Here is a 249-residue protein sequence, read N- to C-terminus: 1-(5-phosphoribosyl)-5-[(5-phosphoribosylamino)methylideneamino] imidazole-4-carboxamide isomerase (249 aa).

The active-site Proton acceptor is aspartate 8. Aspartate 131 (proton donor) is an active-site residue.

The protein belongs to the HisA/HisF family.

The protein localises to the cytoplasm. The catalysed reaction is 1-(5-phospho-beta-D-ribosyl)-5-[(5-phospho-beta-D-ribosylamino)methylideneamino]imidazole-4-carboxamide = 5-[(5-phospho-1-deoxy-D-ribulos-1-ylimino)methylamino]-1-(5-phospho-beta-D-ribosyl)imidazole-4-carboxamide. The protein operates within amino-acid biosynthesis; L-histidine biosynthesis; L-histidine from 5-phospho-alpha-D-ribose 1-diphosphate: step 4/9. The protein is 1-(5-phosphoribosyl)-5-[(5-phosphoribosylamino)methylideneamino] imidazole-4-carboxamide isomerase of Leptothrix cholodnii (strain ATCC 51168 / LMG 8142 / SP-6) (Leptothrix discophora (strain SP-6)).